The sequence spans 618 residues: Membrane protein insertase YidC (618 aa).

A run of 6 helical transmembrane segments spans residues 3-23, 363-383, 439-459, 478-498, 520-540, and 545-565; these read KNTI…SFLS, WGLS…IVVF, LPML…PSAI, FITF…FCLL, PQMA…LFVL, and SGLN…MIIL.

The protein belongs to the OXA1/ALB3/YidC family. Type 1 subfamily. Interacts with the Sec translocase complex via SecD. Specifically interacts with transmembrane segments of nascent integral membrane proteins during membrane integration.

The protein localises to the cell membrane. Its function is as follows. Required for the insertion and/or proper folding and/or complex formation of integral membrane proteins into the membrane. Involved in integration of membrane proteins that insert both dependently and independently of the Sec translocase complex, as well as at least some lipoproteins. Aids folding of multispanning membrane proteins. This is Membrane protein insertase YidC from Bacteroides fragilis (strain YCH46).